The chain runs to 202 residues: Small ribosomal subunit protein uS4 (202 aa).

The tract at residues L15–R42 is disordered. The S4 RNA-binding domain occupies N90–N152.

This sequence belongs to the universal ribosomal protein uS4 family. Part of the 30S ribosomal subunit. Contacts protein S5. The interaction surface between S4 and S5 is involved in control of translational fidelity.

One of the primary rRNA binding proteins, it binds directly to 16S rRNA where it nucleates assembly of the body of the 30S subunit. Functionally, with S5 and S12 plays an important role in translational accuracy. The polypeptide is Small ribosomal subunit protein uS4 (Synechococcus sp. (strain WH7803)).